A 561-amino-acid polypeptide reads, in one-letter code: Liver carboxylesterase B-1 (561 aa).

An N-terminal signal peptide occupies residues 1-18 (MCLRSLFLVSLATCVVCG). An N-linked (GlcNAc...) asparagine glycan is attached at Asn79. Cys87 and Cys116 form a disulfide bridge. Residue Ser221 is the Acyl-ester intermediate of the active site. A disulfide bridge connects residues Cys273 and Cys284. Active-site charge relay system residues include Glu353 and His466. A Prevents secretion from ER motif is present at residues 558–561 (HNEL).

Belongs to the type-B carboxylesterase/lipase family. In terms of assembly, monomer.

It is found in the endoplasmic reticulum lumen. It carries out the reaction a carboxylic ester + H2O = an alcohol + a carboxylate + H(+). Its function is as follows. Involved in the detoxification of xenobiotics and in the activation of ester and amide prodrugs. The sequence is that of Liver carboxylesterase B-1 from Rattus norvegicus (Rat).